A 901-amino-acid polypeptide reads, in one-letter code: Protein translocase subunit SecA (901 aa).

ATP contacts are provided by residues Q87, 105-109 (GEGKT), and D512. Residues 839–901 (QMEEQRRQES…KYKQCHGRLA (63 aa)) form a disordered region. Over residues 841 to 850 (EEQRRQESER) the composition is skewed to basic and acidic residues. Zn(2+)-binding residues include C885, C887, C896, and H897. Positions 891-901 (KKYKQCHGRLA) are enriched in basic residues.

It belongs to the SecA family. Monomer and homodimer. Part of the essential Sec protein translocation apparatus which comprises SecA, SecYEG and auxiliary proteins SecDF-YajC and YidC. Zn(2+) serves as cofactor.

Its subcellular location is the cell inner membrane. The protein localises to the cytoplasm. It catalyses the reaction ATP + H2O + cellular proteinSide 1 = ADP + phosphate + cellular proteinSide 2.. Part of the Sec protein translocase complex. Interacts with the SecYEG preprotein conducting channel. Has a central role in coupling the hydrolysis of ATP to the transfer of proteins into and across the cell membrane, serving both as a receptor for the preprotein-SecB complex and as an ATP-driven molecular motor driving the stepwise translocation of polypeptide chains across the membrane. This is Protein translocase subunit SecA from Erwinia tasmaniensis (strain DSM 17950 / CFBP 7177 / CIP 109463 / NCPPB 4357 / Et1/99).